The following is a 262-amino-acid chain: Ankyrin repeat domain-containing protein 7 (262 aa).

ANK repeat units follow at residues 67–96 (KYRT…KINI), 100–129 (ENKS…DPNL), 133–162 (RYNT…DLEA), 166–195 (DGYT…DVNA), and 199–228 (YQRT…ELSC).

This Macaca fascicularis (Crab-eating macaque) protein is Ankyrin repeat domain-containing protein 7 (ANKRD7).